A 138-amino-acid polypeptide reads, in one-letter code: Acidic phospholipase A2 MVL-PLA2 (138 aa).

A signal peptide spans 1 to 16 (MRTLWIVAVCLMGVEG). Disulfide bonds link Cys-42–Cys-131, Cys-44–Cys-60, Cys-59–Cys-111, Cys-65–Cys-138, Cys-66–Cys-104, Cys-73–Cys-97, and Cys-91–Cys-102. Ca(2+) is bound by residues Tyr-43, Gly-45, and Gly-47. Residue His-63 is part of the active site. Position 64 (Asp-64) interacts with Ca(2+). A May inhibit integrin function (Atypical cell attachment site) motif is present at residues 86–88 (NGD). Asp-105 is a catalytic residue.

Belongs to the phospholipase A2 family. Group II subfamily. D49 sub-subfamily. The cofactor is Ca(2+). Expressed by the venom gland.

Its subcellular location is the secreted. It carries out the reaction a 1,2-diacyl-sn-glycero-3-phosphocholine + H2O = a 1-acyl-sn-glycero-3-phosphocholine + a fatty acid + H(+). Functionally, snake venom phospholipase A2 (PLA2) that displays an inhibitory effect, independent from its catalytic activity, on tumor cell adhesion and migration. This effect is mediated via specific inhibition of integrins alpha-5/beta-1 (ITGA5/ITGB1), alpha-v/beta-3 (ITGAV/ITGB3) and alpha-v/beta-6 (ITGAV/ITGB6). PLA2 catalyzes the calcium-dependent hydrolysis of the 2-acyl groups in 3-sn-phosphoglycerides. The protein is Acidic phospholipase A2 MVL-PLA2 of Macrovipera lebetina transmediterranea (Blunt-nosed viper).